A 93-amino-acid polypeptide reads, in one-letter code: Acylphosphatase (93 aa).

The Acylphosphatase-like domain occupies Cys-7–Arg-93. Catalysis depends on residues Arg-22 and Asn-40.

It belongs to the acylphosphatase family.

It carries out the reaction an acyl phosphate + H2O = a carboxylate + phosphate + H(+). The protein is Acylphosphatase (acyP) of Acaryochloris marina (strain MBIC 11017).